The following is a 306-amino-acid chain: tRNA pseudouridine synthase B (306 aa).

The active-site Nucleophile is Asp51.

The protein belongs to the pseudouridine synthase TruB family. Type 1 subfamily.

It carries out the reaction uridine(55) in tRNA = pseudouridine(55) in tRNA. Responsible for synthesis of pseudouridine from uracil-55 in the psi GC loop of transfer RNAs. The protein is tRNA pseudouridine synthase B of Nocardia farcinica (strain IFM 10152).